The sequence spans 757 residues: Serine/threonine-protein phosphatase with EF-hands 2 (757 aa).

Residues 21 to 46 (KAAALIQRWYRRYMARLEMRRRCTWN) form the IQ domain. A catalytic region spans residues 128 to 544 (ATALVEAFRL…PHIVQYQANK (417 aa)). Asp179, His181, Asp208, and Asn240 together coordinate Mn(2+). His241 acts as the Proton donor in catalysis. His292 contacts Mn(2+). Positions 318 to 349 (CKTRKESENREEQKRKDNQTSSGQKPTPWFLP) are disordered. A compositionally biased stretch (basic and acidic residues) spans 321–335 (RKESENREEQKRKDN). Residue His492 participates in Mn(2+) binding. 3 EF-hand domains span residues 572-607 (AHSS…VLHL), 656-691 (RNRS…FSSH), and 696-731 (ITDD…VEQS). 13 residues coordinate Ca(2+): Asp585, Asp587, Ser589, Asp596, Asp669, Asp671, Ser673, Glu680, Asp709, Asn711, Asp713, His715, and Glu720.

The protein belongs to the PPP phosphatase family. It depends on Mn(2+) as a cofactor. Detected in retina, more specifically in photoreceptors.

It carries out the reaction O-phospho-L-seryl-[protein] + H2O = L-seryl-[protein] + phosphate. The catalysed reaction is O-phospho-L-threonyl-[protein] + H2O = L-threonyl-[protein] + phosphate. Activated by calcium. Functionally, may play a role in phototransduction. May dephosphorylate photoactivated rhodopsin. May function as a calcium sensing regulator of ionic currents, energy production or synaptic transmission. The polypeptide is Serine/threonine-protein phosphatase with EF-hands 2 (Ppef2) (Mus musculus (Mouse)).